Here is a 169-residue protein sequence, read N- to C-terminus: Ribosome maturation factor RimP (169 aa).

This sequence belongs to the RimP family.

It is found in the cytoplasm. In terms of biological role, required for maturation of 30S ribosomal subunits. This Streptomyces avermitilis (strain ATCC 31267 / DSM 46492 / JCM 5070 / NBRC 14893 / NCIMB 12804 / NRRL 8165 / MA-4680) protein is Ribosome maturation factor RimP.